The primary structure comprises 577 residues: Cell adhesion molecule CEACAM20 (577 aa).

A signal peptide spans 1 to 30 (MELAGFHCCSWTVILLSALLPTTWRPPAAA). Over 31–430 (HFIHRADLLS…LQSSSMSPGA (400 aa)) the chain is Extracellular. 4 consecutive Ig-like C2-type domains span residues 48–137 (PLAK…ASLT), 142–223 (PDPV…TNLS), 239–324 (PNIE…LKLT), and 329–415 (PDQV…ASVL). An intrachain disulfide couples Cys-72 to Cys-120. 2 N-linked (GlcNAc...) asparagine glycosylation sites follow: Asn-78 and Asn-102. 2 cysteine pairs are disulfide-bonded: Cys-259-Cys-307 and Cys-358-Cys-399. N-linked (GlcNAc...) asparagine glycosylation occurs at Asn-289. A helical membrane pass occupies residues 431–451 (IAGIVIGILVAIALAIGLGYF). The Cytoplasmic segment spans residues 452 to 577 (LYSTKDRWTR…SLYCKITPSA (126 aa)). Residues 461 to 568 (RRRSASDTTS…YEKLLNSNHS (108 aa)) are disordered. Polar residues predominate over residues 474-484 (IPPTSVMQSTP). Positions 516–526 (DSPEQFYEKKP) are enriched in basic and acidic residues. A compositionally biased stretch (pro residues) spans 536 to 551 (KPLPQIPKQPLMPPGP). A phosphotyrosine mark is found at Tyr-559 and Tyr-570.

It belongs to the immunoglobulin superfamily. CEA family. In terms of assembly, interacts (via extracellular domain) with PTPRH (via extracellular domain); the interaction dephosphorylates CEACAM20. Interacts (phosphorylated form) with SYK (via SH2 domains); the interaction further enhances CEACAM20 phosphorylation. Post-translationally, phosphorylated on tyrosine residues by SYK, SRC and FYN in vitro. As to expression, strongly expressed in the small intestine and colon (at protein level). Minimal expression in other tissues (at protein level). Highly expressed in cecum, colon, ileum, jejunum, and testis, and also detected at lower levels in salivary gland and thymus.

It is found in the cell projection. It localises to the microvillus membrane. The protein localises to the apical cell membrane. Functionally, together with the tyrosine-protein kinase SYK, enhances production of the cytokine CXCL8/IL-8 via the NFKB pathway and may thus have a role in the intestinal immune response. The chain is Cell adhesion molecule CEACAM20 from Mus musculus (Mouse).